A 314-amino-acid polypeptide reads, in one-letter code: MNGLTVVFAGTPEFGLPCLDALIQSRHHLKAVYTQPDRPAGRGRKLQESPVKEWAINHQIPVYQPLNFKNQEAVDELSALKPDVMVVIAYGLILPKAVLEIPRLGCINVHASLLPRWRGASPIQHAILHGDAESGVTIMQMDVGLDTGPMLCKAACPVTSSDTAGSLHDKLAKMSVKPLLDVLEALASNSAQFELQNNELATYAGKINKEEARINWHQSAVEIDRKIRAFNPWPVAYTLAGELMLRIHQAKATDIMSTEMPGMILNIDKNGMLVATSDNALLVEKIQFPGAKIISVRDWLNSGKTQLHTGLMLQ.

A (6S)-5,6,7,8-tetrahydrofolate-binding site is contributed by 112-115 (SLLP).

This sequence belongs to the Fmt family.

The catalysed reaction is L-methionyl-tRNA(fMet) + (6R)-10-formyltetrahydrofolate = N-formyl-L-methionyl-tRNA(fMet) + (6S)-5,6,7,8-tetrahydrofolate + H(+). Its function is as follows. Attaches a formyl group to the free amino group of methionyl-tRNA(fMet). The formyl group appears to play a dual role in the initiator identity of N-formylmethionyl-tRNA by promoting its recognition by IF2 and preventing the misappropriation of this tRNA by the elongation apparatus. The protein is Methionyl-tRNA formyltransferase of Legionella pneumophila subsp. pneumophila (strain Philadelphia 1 / ATCC 33152 / DSM 7513).